A 284-amino-acid polypeptide reads, in one-letter code: Tropomyosin alpha-1 chain (284 aa).

Methionine 1 is subject to N-acetylmethionine. Residues 1–38 (MDAIKKKMQMLKLDKENALDRAEQAEADKKAAEDRSKQ) form a disordered region. Residues 1–284 (MDAIKKKMQM…DHALNDMTSI (284 aa)) are a coiled coil. Residues 12-38 (KLDKENALDRAEQAEADKKAAEDRSKQ) are compositionally biased toward basic and acidic residues. 3 positions are modified to phosphoserine: alanine 31, serine 45, and lysine 51. A disordered region spans residues 116–136 (AEKAADESERGMKVIESRAQK). Phosphoserine is present on residues serine 174, serine 186, and serine 206. Lysine 213 is subject to N6-acetyllysine. Position 252 is a phosphoserine (serine 252). Tyrosine 261 is subject to Phosphotyrosine. Residue serine 271 is modified to Phosphoserine. Serine 283 carries the post-translational modification Phosphoserine; by DAPK1.

The protein belongs to the tropomyosin family. In terms of assembly, homodimer. Heterodimer of an alpha (TPM1, TPM3 or TPM4) and a beta (TPM2) chain. Interacts with HRG (via the HRR domain); the interaction contributes to the antiangiogenic properties of the histidine/proline-rich region (HRR) of HRG. Interacts (via N-terminus) with LMOD2 (via N-terminus) and TMOD1 (via N-terminus). Post-translationally, phosphorylated at Ser-283 by DAPK1 in response to oxidative stress and this phosphorylation enhances stress fiber formation in endothelial cells. As to expression, detected in primary breast cancer tissues but undetectable in normal breast tissues in Sudanese patients. Isoform 1 is expressed in adult and fetal skeletal muscle and cardiac tissues, with higher expression levels in the cardiac tissues. Isoform 10 is expressed in adult and fetal cardiac tissues, but not in skeletal muscle.

The protein resides in the cytoplasm. Its subcellular location is the cytoskeleton. Binds to actin filaments in muscle and non-muscle cells. Plays a central role, in association with the troponin complex, in the calcium dependent regulation of vertebrate striated muscle contraction. Smooth muscle contraction is regulated by interaction with caldesmon. In non-muscle cells is implicated in stabilizing cytoskeleton actin filaments. In Homo sapiens (Human), this protein is Tropomyosin alpha-1 chain (TPM1).